A 284-amino-acid chain; its full sequence is NAD kinase (284 aa).

The active-site Proton acceptor is the aspartate 60. Residues 60 to 61 (DG), 134 to 135 (ND), lysine 145, arginine 162, aspartate 164, and glutamine 235 contribute to the NAD(+) site.

Belongs to the NAD kinase family. Requires a divalent metal cation as cofactor.

It localises to the cytoplasm. It carries out the reaction NAD(+) + ATP = ADP + NADP(+) + H(+). Its function is as follows. Involved in the regulation of the intracellular balance of NAD and NADP, and is a key enzyme in the biosynthesis of NADP. Catalyzes specifically the phosphorylation on 2'-hydroxyl of the adenosine moiety of NAD to yield NADP. The protein is NAD kinase of Treponema denticola (strain ATCC 35405 / DSM 14222 / CIP 103919 / JCM 8153 / KCTC 15104).